We begin with the raw amino-acid sequence, 118 residues long: Basic leucine zipper transcriptional factor ATF-like 3 (118 aa).

Positions 1–69 (MSQGPPAVSV…HESLEQENSV (69 aa)) are disordered. Residues S2 and S24 each carry the phosphoserine modification. Residues 28-91 (DDRKVRRREK…RHLSEVLKEH (64 aa)) enclose the bZIP domain. The segment at 30-55 (RKVRRREKNRVAAQRSRKKQTQKADK) is basic motif. Residues 51-69 (QKADKLHEEHESLEQENSV) show a composition bias toward basic and acidic residues. A leucine-zipper region spans residues 56 to 84 (LHEEHESLEQENSVLRREISKLKEELRHL).

Belongs to the bZIP family. As to quaternary structure, heterodimer; heterodimerizes with JUN family proteins. Interacts with JUN. In terms of tissue distribution, highly expressed in CD8-alpha(+) classical dendritic cells (cDCs), with low to absent expression in other immune cells and non-immune tissues.

It is found in the nucleus. AP-1 family transcription factor that controls the differentiation of CD8(+) thymic conventional dendritic cells in the immune system. Acts via the formation of a heterodimer with JUN family proteins that recognizes and binds DNA sequence 5'-TGA[CG]TCA-3' and regulates expression of target genes. Required for development of CD8-alpha(+) classical dendritic cells (cDCs) and related CD103(+) dendritic cells that cross-present antigens to CD8 T-cells and produce interleukin-12 (IL12) in response to pathogens. This Mus musculus (Mouse) protein is Basic leucine zipper transcriptional factor ATF-like 3 (Batf3).